Here is a 2045-residue protein sequence, read N- to C-terminus: Non-reducing polyketide synthase pks27 (2045 aa).

The segment at 10-247 (IVFGDLTCDS…LTIPIYAPYH (238 aa)) is N-terminal acylcarrier protein transacylase domain (SAT). The Ketosynthase family 3 (KS3) domain maps to 380-813 (HSKLAIIGYS…GGNSSVLIED (434 aa)). Active-site for beta-ketoacyl synthase activity residues include Cys552, His687, and His731. Residues 913–1213 (FAFTGQGSQY…VPTLQRNKDT (301 aa)) are malonyl-CoA:ACP transacylase (MAT) domain. The segment at 1289–1422 (HKLVEEKKDG…ASITFPDAKA (134 aa)) is N-terminal hotdog fold. In terms of domain architecture, PKS/mFAS DH spans 1289–1599 (HKLVEEKKDG…AQGVPRRLMD (311 aa)). The active-site Proton acceptor; for dehydratase activity is the His1321. The tract at residues 1442–1599 (AARLNTDDRV…AQGVPRRLMD (158 aa)) is C-terminal hotdog fold. Asp1511 acts as the Proton donor; for dehydratase activity in catalysis. Positions 1612 to 1636 (APAGGTLNASQSAAANPAADPSAQA) are disordered. Positions 1619-1636 (NASQSAAANPAADPSAQA) are enriched in low complexity. The Carrier domain occupies 1635-1712 (QADSDNWQAA…ELEAFWKQGA (78 aa)). The segment at 1640–1709 (NWQAALKIIS…TIKELEAFWK (70 aa)) is product template (PT) domain. O-(pantetheine 4'-phosphoryl)serine is present on Ser1672. Residues 1735–1776 (EAEVDQDKNSSDEDRSSLGTSSYEVISPNTTETTPEITKTSS) form a disordered region. The segment covering 1739 to 1750 (DQDKNSSDEDRS) has biased composition (basic and acidic residues). The span at 1760–1776 (ISPNTTETTPEITKTSS) shows a compositional bias: low complexity. The tract at residues 1798–2039 (TLFLLPDGSG…AKRLSEMIEG (242 aa)) is thioesterase.

The cofactor is pantetheine 4'-phosphate.

It participates in secondary metabolite biosynthesis. In terms of biological role, non-reducing polyketide synthase (NRPKS); part of the gene cluster 27 that mediates the biosynthesis of asparasone A, a sclerotium-specific anthraquinone pigment important for sclerotial survival. Catalyzes the formation of the aromatic polyketide from acetyl coenzyme A and seven malonyl coenzyme A molecules. Through its product template (PT) domain, catalyzes the cyclization of polyketide backbone via C6-C11 aldolcondensation. The chain is Non-reducing polyketide synthase pks27 from Aspergillus flavus (strain ATCC 200026 / FGSC A1120 / IAM 13836 / NRRL 3357 / JCM 12722 / SRRC 167).